The following is a 2057-amino-acid chain: MLRLVVQSAKIDPPLAPLPRPCMSIDFRDIKKRTRVVEGNDPVWNETLIWHLWNRPLENDSFLQVTLQDMGSQKKERFIGLATVLLKPLLKQPSEVLFVKDLTLLNHSMKPTDCTVTLQVAHMSNQDIEKTGAEDHLGITAREAASQKLMVPGSTAHRALSSKPQHFQVRVKVFEARQLMGNNIKPVVKVSIAGQQHQTRIKMGNNPFFNEIFFQNFHEVPAKFFDETILIQVVNSSAMRYKAEIGRFQTDIGFIYHSPGHTLLRKWLGLCQPNNPGSGVTGYLKVTIYALGVGDQALIDQKLLYGTDDTDIQIFKSAVVPINMAYLQLFIYCAEDLHLKKHQSVNPQLEVELIGEKLRTHMQTQTDNPIWNQILTFRIQLPCLSSYIKFRVLDCRKKDCPDEIGTASLSLNQISSTGEEIEGVYSGFLPCFGPSFLTLHGGKKAPFRIQEEGACIPDSVRDGLAYRGRVFLELITQIKSYQDSTIKDLSHEVTRIEKHQNRQKYGLCVIFLSCTMMPNFKELIHFEVSIGHYGNKMDLNYKPLVSSTPYSPVIYDGNIYHYVPWYNTKPVVAVTSNWEDVSFRMNCLNLLHFTRDRLKANLDTLKSTRNPKDPALLYQWEKLLRELAEDCKRPLPCMTYQPKATSLDRKRWQLRSLLLQELAQKAKQAKPKDMVATAEDWLYRLNTVLPEPQMGLPDVMIWLVAKEQRVAYAQVPAHSVLFSPAGALHSGRLCGKIQTLFLQYPEGEGQKDVLPAHLRVCMWLGNVTDSKDLQLLRQGDTAVYAEMYENQAKYKDQWGQQGLYHCPNFSDVMGNKTLPMTDFQPPLGWHWQDSWTVEPQRRLLLDIDINKSQVLEEVYENQGRDTRGAWGPAAIPNTDVNGQPMEARENVKCPQGWHFKKDWVVELNHAVDSKGWEYGVGIPPSGLPQVWSPVEKTYHSCRRRRWARVRFRNHGELSHEQETLSFLQLGLAKGEEEGWEYDTFGSKFHLNPQPQSRFRRRCWRRRLAPNKDKGIAPIFLLEGSLAMDLKYHAGKEEDSKTWPWGLDRQFRDPQRQDTRPPNLPFIYCTFNKPHYYQLFCYIYQARNLVSNQILTFQGPFIRVVFLNHSQCTQTLRSSAGPTWAQTLIFQHLLLYENPQDTKESPPLVVLELWQRDFWGKESLWGRSVWPPMVWLDLQDRILPPMRWHPLVKELGKEEGEILASCELILQTEKLGEKQLPILSVPWKNGAYTLPKSIQPTIKRMAIEILAWGLRNMKKASSPQLLVEFGEESLRTEPIRDFQTNPNFPESESVLVLTVLMPTEEAYALPLVVKVVDNWAFGQQTVTGQANIDFLQPYFCDPWAQDYMHPKLPTLSEKKHQDFLGYLYRKFWFKSSKAEDEYEHEVDWWSKLFWATDEHKSLKYKYKDYHTLKVYECELEAVPAFQGLQDFCQTFKLYQEQPKLDSPVVGEFKGLFRIYPFPENPEAPKPPLQFLVWPEREDFPQPCLVRVYMVRAINLQPQDYNGLCDPYVILKLGKTELGNRDMYQPNTLDPIFGMMFELTCNIPLEKDLEIQLYDFDLFSPDDKIGTTVIDLENRLLSGFGAHCGLSKSYCQSGPFRWRDQMPPSYLLERYAKRKGLPPPLFSPEEDAVFYNGKKFKLQSFEPKTPTVHGLGPKKERLALYLLHTQGLVPEHVETRTLYSHSQPGIDQGKVQMWVDIFPKKLGPPGPQVNINPRKPKRYELRCIIWKTANVDLVDDNLSREKTSDIYIKGWLYGLEKDMQKTDIHYHSLTGEADFNWRFIFTMDYLAAERTCVQSQKDYIWSLDATSMKFPARLIIQVWDNDIFSPDDFLGVLELDLSDMPLPARHAKQCSIRMMDADPKWPYFIQYKHFSLFKKKTVTGWWPCQVLDGGKWRLSGKVKMSLEILSEKEALIKPAGRGQSEPNQYPTLHPPLRTNTSFTWLRSPVQNFCYIFWKRYRFKLIAFMVISIIALMLFNFIYSAPHYLAMSWIKPQLQLYPPIKIFNIINSLNTSNASSSILPTQDPNLKPTIDHEWKLHPGPTNHLSDIFPELPAPGD.

7 consecutive C2 domains span residues M1–V99, P152–R265, D308–Y425, D1057–H1188, K1213–Y1346, P1467–G1587, and G1705–S1853. Residues D1502, D1508, D1557, F1558, D1559, S1562, D1565, D1824, S1827, and D1830 each coordinate Ca(2+). The helical transmembrane segment at L1962–A1982 threads the bilayer.

It belongs to the ferlin family. In terms of assembly, interacts (via second C2 domain) with EHD1 and EHD2. Ca(2+) serves as cofactor.

The protein resides in the cell membrane. The protein localises to the membrane. In terms of biological role, plays a role in myoblast fusion; probable mediator of endocytic recycling for membrane trafficking events during myotube formation. In Homo sapiens (Human), this protein is Fer-1-like protein 5 (FER1L5).